The following is a 263-amino-acid chain: Uroplakin-3b-like protein 1 (263 aa).

The N-terminal stretch at 1–33 (MDNSWRLGPAIGLSAGQSQLLVSLLLLLTRVQP) is a signal peptide. Topologically, residues 34 to 204 (GTDVAAPEHI…PGPQSPGTVV (171 aa)) are extracellular. N-linked (GlcNAc...) asparagine glycans are attached at residues Asn51, Asn76, and Asn91. Residues 205–225 (IIAILSILLAVLLTVLLAVLI) traverse the membrane as a helical segment. The Cytoplasmic segment spans residues 226–263 (YTCFNSCRSTSLSGPEEAGSVRRYTTHLAFSTPAEGAS).

The protein belongs to the uroplakin-3 family.

The protein resides in the membrane. This Homo sapiens (Human) protein is Uroplakin-3b-like protein 1.